The primary structure comprises 239 residues: Putative GEM-like protein 3 (239 aa).

The tract at residues histidine 29–alanine 68 is disordered. The GRAM domain occupies lysine 128 to isoleucine 191.

This sequence belongs to the GEM family.

The chain is Putative GEM-like protein 3 from Arabidopsis thaliana (Mouse-ear cress).